Consider the following 919-residue polypeptide: Probable dipeptidyl-aminopeptidase B (919 aa).

Basic and acidic residues predominate over residues 1–10 (MRRSDGHEET). Residues 1-53 (MRRSDGHEETSEFLPMTHSRSVSAASQTSTDSSLSTESLFPREQKPFPNAMGG) are disordered. The Cytoplasmic segment spans residues 1 to 92 (MRRSDGHEET…AATGGGRARR (92 aa)). Residues 21–38 (SVSAASQTSTDSSLSTES) show a composition bias toward low complexity. The chain crosses the membrane as a helical; Signal-anchor for type II membrane protein span at residues 93 to 113 (IFWILVLLCLGGWLLAFVLFL). Topologically, residues 114 to 919 (TGGRANYQTA…MKRSLRLLSP (806 aa)) are vacuolar. Residues Asn200, Asn352, and Asn643 are each glycosylated (N-linked (GlcNAc...) asparagine). Catalysis depends on Ser757, which acts as the Charge relay system. N-linked (GlcNAc...) asparagine glycosylation occurs at Asn811. Residues Asp834 and His867 each act as charge relay system in the active site.

This sequence belongs to the peptidase S9B family.

It localises to the vacuole membrane. It catalyses the reaction Release of an N-terminal dipeptide, Xaa-Yaa-|-Zaa-, from a polypeptide, preferentially when Yaa is Pro, provided Zaa is neither Pro nor hydroxyproline.. Its function is as follows. Type IV dipeptidyl-peptidase which removes N-terminal dipeptides sequentially from polypeptides having unsubstituted N-termini provided that the penultimate residue is proline. This is Probable dipeptidyl-aminopeptidase B (dapB) from Aspergillus fumigatus (strain CBS 144.89 / FGSC A1163 / CEA10) (Neosartorya fumigata).